Reading from the N-terminus, the 262-residue chain is Protein BcsX (262 aa).

The protein operates within glycan metabolism; bacterial cellulose biosynthesis. The polypeptide is Protein BcsX (bcsX) (Komagataeibacter xylinus (Gluconacetobacter xylinus)).